We begin with the raw amino-acid sequence, 265 residues long: Phosphonates import ATP-binding protein PhnC 1 (265 aa).

The ABC transporter domain maps to 3–247 (LRLSAIDLRH…HLDTLYANEQ (245 aa)). ATP is bound at residue 36–43 (GPSGAGKT).

This sequence belongs to the ABC transporter superfamily. Phosphonates importer (TC 3.A.1.9.1) family. As to quaternary structure, the complex is composed of two ATP-binding proteins (PhnC), two transmembrane proteins (PhnE) and a solute-binding protein (PhnD).

It localises to the cell inner membrane. It carries out the reaction phosphonate(out) + ATP + H2O = phosphonate(in) + ADP + phosphate + H(+). Part of the ABC transporter complex PhnCDE involved in phosphonates import. Responsible for energy coupling to the transport system. The protein is Phosphonates import ATP-binding protein PhnC 1 of Pseudomonas syringae pv. tomato (strain ATCC BAA-871 / DC3000).